A 337-amino-acid polypeptide reads, in one-letter code: RNA 3'-terminal phosphate cyclase (337 aa).

ATP contacts are provided by residues glutamine 101 and 282-285 (HMSD). The Tele-AMP-histidine intermediate role is filled by histidine 306.

It belongs to the RNA 3'-terminal cyclase family. Type 1 subfamily.

The protein resides in the cytoplasm. It catalyses the reaction a 3'-end 3'-phospho-ribonucleotide-RNA + ATP = a 3'-end 2',3'-cyclophospho-ribonucleotide-RNA + AMP + diphosphate. In terms of biological role, catalyzes the conversion of 3'-phosphate to a 2',3'-cyclic phosphodiester at the end of RNA. The mechanism of action of the enzyme occurs in 3 steps: (A) adenylation of the enzyme by ATP; (B) transfer of adenylate to an RNA-N3'P to produce RNA-N3'PP5'A; (C) and attack of the adjacent 2'-hydroxyl on the 3'-phosphorus in the diester linkage to produce the cyclic end product. The biological role of this enzyme is unknown but it is likely to function in some aspects of cellular RNA processing. The chain is RNA 3'-terminal phosphate cyclase from Saccharolobus islandicus (strain M.16.4 / Kamchatka #3) (Sulfolobus islandicus).